The primary structure comprises 142 residues: Large ribosomal subunit protein uL11 (142 aa).

The protein belongs to the universal ribosomal protein uL11 family. In terms of assembly, part of the ribosomal stalk of the 50S ribosomal subunit. Interacts with L10 and the large rRNA to form the base of the stalk. L10 forms an elongated spine to which L12 dimers bind in a sequential fashion forming a multimeric L10(L12)X complex. Post-translationally, one or more lysine residues are methylated.

In terms of biological role, forms part of the ribosomal stalk which helps the ribosome interact with GTP-bound translation factors. The chain is Large ribosomal subunit protein uL11 from Lachnoclostridium phytofermentans (strain ATCC 700394 / DSM 18823 / ISDg) (Clostridium phytofermentans).